We begin with the raw amino-acid sequence, 51 residues long: SPbeta prophage-derived uncharacterized protein YorQ (51 aa).

This Bacillus subtilis (strain 168) protein is SPbeta prophage-derived uncharacterized protein YorQ (yorQ).